We begin with the raw amino-acid sequence, 277 residues long: Large ribosomal subunit protein uL2 (277 aa).

Disordered stretches follow at residues Arg35 to Gly57 and Gly222 to Arg277. Composition is skewed to basic residues over residues Leu37–Gly57 and Val268–Arg277.

The protein belongs to the universal ribosomal protein uL2 family. Part of the 50S ribosomal subunit. Forms a bridge to the 30S subunit in the 70S ribosome.

In terms of biological role, one of the primary rRNA binding proteins. Required for association of the 30S and 50S subunits to form the 70S ribosome, for tRNA binding and peptide bond formation. It has been suggested to have peptidyltransferase activity; this is somewhat controversial. Makes several contacts with the 16S rRNA in the 70S ribosome. In Frankia casuarinae (strain DSM 45818 / CECT 9043 / HFP020203 / CcI3), this protein is Large ribosomal subunit protein uL2.